The sequence spans 471 residues: UDP-N-acetylmuramoylalanine--D-glutamate ligase (471 aa).

123–129 (GTNGKST) contributes to the ATP binding site.

Belongs to the MurCDEF family.

The protein localises to the cytoplasm. It catalyses the reaction UDP-N-acetyl-alpha-D-muramoyl-L-alanine + D-glutamate + ATP = UDP-N-acetyl-alpha-D-muramoyl-L-alanyl-D-glutamate + ADP + phosphate + H(+). Its pathway is cell wall biogenesis; peptidoglycan biosynthesis. Cell wall formation. Catalyzes the addition of glutamate to the nucleotide precursor UDP-N-acetylmuramoyl-L-alanine (UMA). The chain is UDP-N-acetylmuramoylalanine--D-glutamate ligase from Caulobacter vibrioides (strain ATCC 19089 / CIP 103742 / CB 15) (Caulobacter crescentus).